Here is a 32-residue protein sequence, read N- to C-terminus: Conotoxin pr6d (32 aa).

A 4-hydroxyproline modification is found at P5. 3 disulfide bridges follow: C7–C20, C14–C25, and C19–C30.

As to expression, expressed by the venom duct.

The protein resides in the secreted. The sequence is that of Conotoxin pr6d from Conus parius (Cone snail).